Here is a 118-residue protein sequence, read N- to C-terminus: Small ribosomal subunit protein uS13 (118 aa).

The disordered stretch occupies residues 92–118 (RRGHPLRGQRTRTNARTRKGPRKAIRK).

This sequence belongs to the universal ribosomal protein uS13 family. Part of the 30S ribosomal subunit. Forms a loose heterodimer with protein S19. Forms two bridges to the 50S subunit in the 70S ribosome.

Its function is as follows. Located at the top of the head of the 30S subunit, it contacts several helices of the 16S rRNA. In the 70S ribosome it contacts the 23S rRNA (bridge B1a) and protein L5 of the 50S subunit (bridge B1b), connecting the 2 subunits; these bridges are implicated in subunit movement. Contacts the tRNAs in the A and P-sites. The polypeptide is Small ribosomal subunit protein uS13 (Xanthomonas campestris pv. campestris (strain ATCC 33913 / DSM 3586 / NCPPB 528 / LMG 568 / P 25)).